Here is a 259-residue protein sequence, read N- to C-terminus: 1-(5-phosphoribosyl)-5-[(5-phosphoribosylamino)methylideneamino] imidazole-4-carboxamide isomerase (259 aa).

D8 serves as the catalytic Proton acceptor. The Proton donor role is filled by D129.

This sequence belongs to the HisA/HisF family.

It is found in the cytoplasm. It carries out the reaction 1-(5-phospho-beta-D-ribosyl)-5-[(5-phospho-beta-D-ribosylamino)methylideneamino]imidazole-4-carboxamide = 5-[(5-phospho-1-deoxy-D-ribulos-1-ylimino)methylamino]-1-(5-phospho-beta-D-ribosyl)imidazole-4-carboxamide. It participates in amino-acid biosynthesis; L-histidine biosynthesis; L-histidine from 5-phospho-alpha-D-ribose 1-diphosphate: step 4/9. The sequence is that of 1-(5-phosphoribosyl)-5-[(5-phosphoribosylamino)methylideneamino] imidazole-4-carboxamide isomerase from Pelotomaculum thermopropionicum (strain DSM 13744 / JCM 10971 / SI).